The chain runs to 167 residues: Large ribosomal subunit protein bL9 (167 aa).

The protein belongs to the bacterial ribosomal protein bL9 family.

Binds to the 23S rRNA. The chain is Large ribosomal subunit protein bL9 from Chlamydia trachomatis serovar L2 (strain ATCC VR-902B / DSM 19102 / 434/Bu).